A 251-amino-acid chain; its full sequence is Protein unc-119 homolog B (251 aa).

The disordered stretch occupies residues 1–28 (MSGSNPKAAAAASAAGPGGLVAGKEEKK). Ser2 bears the N-acetylserine mark. At Lys24 the chain carries N6-acetyllysine. Position 142 (Tyr142) interacts with tetradecanoate.

It belongs to the PDE6D/unc-119 family. As to quaternary structure, found in a complex with ARL3, RP2 and UNC119B; RP2 induces hydrolysis of GTP ARL3 in the complex, leading to the release of UNC119B. Interacts with NPHP3 (when myristoylated). Interacts with CYS1 (when myristoylated). Interacts with MACIR; interaction only takes place when UNC119B is not liganded with myristoylated proteins.

The protein resides in the cell projection. It is found in the cilium. Functionally, myristoyl-binding protein that acts as a cargo adapter: specifically binds the myristoyl moiety of a subset of N-terminally myristoylated proteins and is required for their localization. Binds myristoylated NPHP3 and plays a key role in localization of NPHP3 to the primary cilium membrane. Does not bind all myristoylated proteins. Probably plays a role in trafficking proteins in photoreceptor cells. The protein is Protein unc-119 homolog B (UNC119B) of Homo sapiens (Human).